Here is a 96-residue protein sequence, read N- to C-terminus: NADH-ubiquinone oxidoreductase chain 4L (96 aa).

A run of 3 helical transmembrane segments spans residues 1–21 (MPTT…SLQR), 27–47 (LLLT…LWAL), and 57–77 (APLI…SLMI).

This sequence belongs to the complex I subunit 4L family.

Its subcellular location is the mitochondrion membrane. It catalyses the reaction a ubiquinone + NADH + 5 H(+)(in) = a ubiquinol + NAD(+) + 4 H(+)(out). Core subunit of the mitochondrial membrane respiratory chain NADH dehydrogenase (Complex I) which catalyzes electron transfer from NADH through the respiratory chain, using ubiquinone as an electron acceptor. Part of the enzyme membrane arm which is embedded in the lipid bilayer and involved in proton translocation. This is NADH-ubiquinone oxidoreductase chain 4L (MT-ND4L) from Petromyzon marinus (Sea lamprey).